Consider the following 180-residue polypeptide: Small ribosomal subunit protein uS4 (180 aa).

Positions 103–174 (RRLQTLVFKK…HPERMVIEEV (72 aa)) constitute an S4 RNA-binding domain.

It belongs to the universal ribosomal protein uS4 family. In terms of assembly, part of the 30S ribosomal subunit. Contacts protein S5. The interaction surface between S4 and S5 is involved in control of translational fidelity.

One of the primary rRNA binding proteins, it binds directly to 16S rRNA where it nucleates assembly of the body of the 30S subunit. In terms of biological role, with S5 and S12 plays an important role in translational accuracy. In Thermococcus sibiricus (strain DSM 12597 / MM 739), this protein is Small ribosomal subunit protein uS4.